We begin with the raw amino-acid sequence, 414 residues long: Serine hydroxymethyltransferase (414 aa).

Residues Leu-117 and 121–123 (GHL) contribute to the (6S)-5,6,7,8-tetrahydrofolate site. Lys-226 carries the post-translational modification N6-(pyridoxal phosphate)lysine. Residue 349-351 (SPF) participates in (6S)-5,6,7,8-tetrahydrofolate binding.

Belongs to the SHMT family. In terms of assembly, homodimer. The cofactor is pyridoxal 5'-phosphate.

It is found in the cytoplasm. It carries out the reaction (6R)-5,10-methylene-5,6,7,8-tetrahydrofolate + glycine + H2O = (6S)-5,6,7,8-tetrahydrofolate + L-serine. It functions in the pathway one-carbon metabolism; tetrahydrofolate interconversion. Its pathway is amino-acid biosynthesis; glycine biosynthesis; glycine from L-serine: step 1/1. Catalyzes the reversible interconversion of serine and glycine with tetrahydrofolate (THF) serving as the one-carbon carrier. This reaction serves as the major source of one-carbon groups required for the biosynthesis of purines, thymidylate, methionine, and other important biomolecules. Also exhibits THF-independent aldolase activity toward beta-hydroxyamino acids, producing glycine and aldehydes, via a retro-aldol mechanism. In Desulfovibrio desulfuricans (strain ATCC 27774 / DSM 6949 / MB), this protein is Serine hydroxymethyltransferase.